The following is a 277-amino-acid chain: Large ribosomal subunit protein uL2 (277 aa).

Basic residues-rich tracts occupy residues 210-219 (RARWAGKRPQ) and 259-277 (TRSKKARSNKFIVRSRNKK). A disordered region spans residues 210–277 (RARWAGKRPQ…KFIVRSRNKK (68 aa)).

This sequence belongs to the universal ribosomal protein uL2 family. Part of the 50S ribosomal subunit. Forms a bridge to the 30S subunit in the 70S ribosome.

One of the primary rRNA binding proteins. Required for association of the 30S and 50S subunits to form the 70S ribosome, for tRNA binding and peptide bond formation. It has been suggested to have peptidyltransferase activity; this is somewhat controversial. Makes several contacts with the 16S rRNA in the 70S ribosome. The polypeptide is Large ribosomal subunit protein uL2 (Ligilactobacillus salivarius (strain UCC118) (Lactobacillus salivarius)).